We begin with the raw amino-acid sequence, 423 residues long: Autophagy-related protein 18 (423 aa).

WD repeat units lie at residues 1–34 (MNYV…KIFT), 183–223 (AHRA…KLYQ), 228–267 (TYPS…TGMP), and 367–407 (SRSG…GGEG). A L/FRRG motif motif is present at residues 224-228 (FRRGT). Residues 260 to 320 (GGPVTGMPES…KSTGTFGSMI (61 aa)) form a disordered region.

It belongs to the WD repeat PROPPIN family. In terms of assembly, component of the PI(3,5)P2 regulatory complex.

The protein localises to the preautophagosomal structure membrane. The protein resides in the vacuole membrane. Its subcellular location is the endosome membrane. The PI(3,5)P2 regulatory complex regulates both the synthesis and turnover of phosphatidylinositol 3,5-bisphosphate (PtdIns(3,5)P2). Necessary for proper vacuole morphology. Plays an important role in osmotically-induced vacuole fragmentation. Required for cytoplasm to vacuole transport (Cvt) vesicle formation, pexophagy and starvation-induced autophagy. Involved in correct atg9 trafficking to the pre-autophagosomal structure. Might also be involved in premeiotic DNA replication. The chain is Autophagy-related protein 18 (atg18) from Sclerotinia sclerotiorum (strain ATCC 18683 / 1980 / Ss-1) (White mold).